The primary structure comprises 227 residues: Protein p26 (227 aa).

In terms of assembly, self-associates.

Its subcellular location is the host cell junction. It is found in the host plasmodesma. This Lettuce infectious yellows virus (isolate United States/92) (LIYV) protein is Protein p26.